The primary structure comprises 508 residues: PTS system mannitol-specific EIICB component (508 aa).

Over M1–N30 the chain is Cytoplasmic. Residues F19–D351 form the PTS EIIC type-2 domain. The helical transmembrane segment at I31–N52 threads the bilayer. Over K53 to S56 the chain is Extracellular. A helical transmembrane segment spans residues E57–R77. Residues L78 to F141 lie on the Cytoplasmic side of the membrane. Residues S142–E163 traverse the membrane as a helical segment. Residues F164–A172 are Extracellular-facing. Residues V173–K193 traverse the membrane as a helical segment. Topologically, residues I194–A280 are cytoplasmic. A helical membrane pass occupies residues V281–K300. The Extracellular portion of the chain corresponds to S301–F320. A helical transmembrane segment spans residues L321 to L342. The Cytoplasmic segment spans residues K343–K508. Residues A355 to E400 form a disordered region. Positions S367–E392 are enriched in low complexity. The PTS EIIB type-2 domain occupies N420–K508. The active-site Phosphocysteine intermediate; for EIIB activity is C426. C426 is subject to Phosphocysteine; by EIIA.

In terms of assembly, homodimer.

The protein resides in the cell membrane. It catalyses the reaction D-mannitol(out) + N(pros)-phospho-L-histidyl-[protein] = D-mannitol 1-phosphate(in) + L-histidyl-[protein]. Functionally, the phosphoenolpyruvate-dependent sugar phosphotransferase system (sugar PTS), a major carbohydrate active transport system, catalyzes the phosphorylation of incoming sugar substrates concomitantly with their translocation across the cell membrane. The enzyme II CmtAB PTS system is involved in D-mannitol transport. This chain is PTS system mannitol-specific EIICB component (mtlA), found in Staphylococcus saprophyticus subsp. saprophyticus (strain ATCC 15305 / DSM 20229 / NCIMB 8711 / NCTC 7292 / S-41).